Consider the following 245-residue polypeptide: Cytochrome c oxidase subunit 2 (245 aa).

The Mitochondrial intermembrane portion of the chain corresponds to 1 to 36 (MYMLNNMLNDVPTPWGMFFQDSATPNMEGMMELHNN). A helical transmembrane segment spans residues 37–56 (VMFYLCMMLGFVSYMLYNML). The Mitochondrial matrix portion of the chain corresponds to 57–76 (TTYNHSVLPYKYLYHGQFIE). A helical transmembrane segment spans residues 77–101 (IVWTTFPAMILLIIAFPSFILLYIC). At 102 to 245 (DEVIAPAMTI…GEFLAWIDEQ (144 aa)) the chain is on the mitochondrial intermembrane side. The Cu cation site is built by histidine 180, cysteine 215, glutamate 217, cysteine 219, histidine 223, and methionine 226. Mg(2+) is bound at residue glutamate 217.

The protein belongs to the cytochrome c oxidase subunit 2 family. In terms of assembly, component of the cytochrome c oxidase (complex IV, CIV), a multisubunit enzyme composed of a catalytic core of 3 subunits and several supernumerary subunits. The complex exists as a monomer or a dimer and forms supercomplexes (SCs) in the inner mitochondrial membrane with ubiquinol-cytochrome c oxidoreductase (cytochrome b-c1 complex, complex III, CIII). Requires Cu cation as cofactor.

It localises to the mitochondrion inner membrane. The enzyme catalyses 4 Fe(II)-[cytochrome c] + O2 + 8 H(+)(in) = 4 Fe(III)-[cytochrome c] + 2 H2O + 4 H(+)(out). Component of the cytochrome c oxidase, the last enzyme in the mitochondrial electron transport chain which drives oxidative phosphorylation. The respiratory chain contains 3 multisubunit complexes succinate dehydrogenase (complex II, CII), ubiquinol-cytochrome c oxidoreductase (cytochrome b-c1 complex, complex III, CIII) and cytochrome c oxidase (complex IV, CIV), that cooperate to transfer electrons derived from NADH and succinate to molecular oxygen, creating an electrochemical gradient over the inner membrane that drives transmembrane transport and the ATP synthase. Cytochrome c oxidase is the component of the respiratory chain that catalyzes the reduction of oxygen to water. Electrons originating from reduced cytochrome c in the intermembrane space (IMS) are transferred via the dinuclear copper A center (CU(A)) of subunit 2 and heme A of subunit 1 to the active site in subunit 1, a binuclear center (BNC) formed by heme A3 and copper B (CU(B)). The BNC reduces molecular oxygen to 2 water molecules using 4 electrons from cytochrome c in the IMS and 4 protons from the mitochondrial matrix. In Dekkera bruxellensis (Brettanomyces custersii), this protein is Cytochrome c oxidase subunit 2 (COX2).